The primary structure comprises 186 residues: Orotate phosphoribosyltransferase (186 aa).

5-phospho-alpha-D-ribose 1-diphosphate-binding positions include Arg-96, Lys-100, His-102, and 121–129 (DDVATTGTS). Thr-125 and Arg-153 together coordinate orotate.

Belongs to the purine/pyrimidine phosphoribosyltransferase family. PyrE subfamily. In terms of assembly, homodimer. Mg(2+) serves as cofactor.

The enzyme catalyses orotidine 5'-phosphate + diphosphate = orotate + 5-phospho-alpha-D-ribose 1-diphosphate. The protein operates within pyrimidine metabolism; UMP biosynthesis via de novo pathway; UMP from orotate: step 1/2. In terms of biological role, catalyzes the transfer of a ribosyl phosphate group from 5-phosphoribose 1-diphosphate to orotate, leading to the formation of orotidine monophosphate (OMP). The sequence is that of Orotate phosphoribosyltransferase from Aeropyrum pernix (strain ATCC 700893 / DSM 11879 / JCM 9820 / NBRC 100138 / K1).